The primary structure comprises 86 residues: Conotoxin Ec15a (86 aa).

The first 23 residues, 1–23, serve as a signal peptide directing secretion; sequence MEKLTILILVATVLLAIQVLGQG. Residues 24 to 49 constitute a propeptide that is removed on maturation; it reads EGEKPPKEWVQQYAAKRLWALMKGPR. Pyrrolidone carboxylic acid is present on Q50.

The protein belongs to the conotoxin O2 superfamily. Post-translationally, contains 4 disulfide bonds. In terms of tissue distribution, expressed by the venom duct.

It is found in the secreted. In Conus emaciatus (False virgin cone), this protein is Conotoxin Ec15a.